The chain runs to 661 residues: Ecdysteroid-phosphate phosphatase (661 aa).

One can recognise a UBA domain in the interval 16–57 (KQDVSPLQILLQMGFRRQRALKALAATGNRSVQLASDWLLTH). The SH3 domain maps to 235–300 (ANHQVYKVTQ…PAVYTRRTAE (66 aa)). Residue R409 is part of the active site. Residue H410 is the Tele-phosphohistidine intermediate of the active site. H590 is a catalytic residue.

Homodimer. As to expression, detected in non-diapause eggs, with highest expression between 2 and 5 days after oviposition. Not detected in other tissues tested.

The protein localises to the cytoplasm. It is found in the cytosol. It carries out the reaction ecdysone 22-phosphate + H2O = ecdysone + phosphate. It catalyses the reaction 20-hydroxyecdysone 22-phosphate + H2O = 20-hydroxyecdysone + phosphate. The catalysed reaction is 2-deoxyecdysone 22-phosphate + H2O = 2-deoxyecdysone + phosphate. The enzyme catalyses O-phospho-L-tyrosyl-[protein] + H2O = L-tyrosyl-[protein] + phosphate. Competitively inhibited by 4-nitrophenyl phosphate (para-nitrophenylphosphate, pNPP). Also inhibited by tungstate, vanadate, and phosphate. In terms of biological role, steroid phosphatase which catalyzes the conversion of inactive phosphorylated ecdysteroids into their active forms. Shows high activity towards ecdysone 22-phosphate (E22P). Has lower activity towards other ecdysteriod phosphates including 20-hydroxyecdysone 22-phosphate (20E22P) and 2-deoxyecdysone 22-phosphate (2dE22P). Also has protein tyrosine phosphatase activity. The protein is Ecdysteroid-phosphate phosphatase of Bombyx mori (Silk moth).